A 119-amino-acid chain; its full sequence is ATP-dependent Clp protease adapter protein ClpS (119 aa).

Residues 1–29 (MICPPGENKSMAERKQGGQGNGVGSSVVT) form a disordered region.

This sequence belongs to the ClpS family. In terms of assembly, binds to the N-terminal domain of the chaperone ClpA.

Involved in the modulation of the specificity of the ClpAP-mediated ATP-dependent protein degradation. This is ATP-dependent Clp protease adapter protein ClpS from Caulobacter vibrioides (strain ATCC 19089 / CIP 103742 / CB 15) (Caulobacter crescentus).